A 436-amino-acid chain; its full sequence is Trigger factor (436 aa).

One can recognise a PPIase FKBP-type domain in the interval 163–248 (GDRATIDFEG…VKKIEAAHLP (86 aa)).

Belongs to the FKBP-type PPIase family. Tig subfamily.

The protein resides in the cytoplasm. The catalysed reaction is [protein]-peptidylproline (omega=180) = [protein]-peptidylproline (omega=0). Involved in protein export. Acts as a chaperone by maintaining the newly synthesized protein in an open conformation. Functions as a peptidyl-prolyl cis-trans isomerase. In Polaromonas sp. (strain JS666 / ATCC BAA-500), this protein is Trigger factor.